Reading from the N-terminus, the 601-residue chain is Oligoendopeptidase F homolog (601 aa).

Zn(2+) is bound at residue histidine 387. The active site involves glutamate 388. Zn(2+) is bound by residues histidine 391 and histidine 394.

Belongs to the peptidase M3 family. The cofactor is Zn(2+).

Its function is as follows. Hydrolyzes peptides containing between 7 and 17 amino acids with a rather wide specificity. The polypeptide is Oligoendopeptidase F homolog (pepF) (Lactococcus lactis subsp. lactis (strain IL1403) (Streptococcus lactis)).